The primary structure comprises 880 residues: DNA polymerase I (880 aa).

Residues 174 to 268 (TPEQIIDMKG…SGLEYQGFNR (95 aa)) form the 5'-3' exonuclease domain. The region spanning 302–470 (DINVKTVTDV…LREKLVQELE (169 aa)) is the 3'-5' exonuclease domain.

The protein belongs to the DNA polymerase type-A family. Single-chain monomer with multiple functions.

It catalyses the reaction DNA(n) + a 2'-deoxyribonucleoside 5'-triphosphate = DNA(n+1) + diphosphate. In addition to polymerase activity, this DNA polymerase exhibits 3'-5' and 5'-3' exonuclease activity. In Bacillus subtilis (strain 168), this protein is DNA polymerase I (polA).